Reading from the N-terminus, the 451-residue chain is Chromosomal replication initiator protein DnaA (451 aa).

The domain I, interacts with DnaA modulators stretch occupies residues 1–72 (MSLPTSLWDK…TELLDELSDT (72 aa)). Residues 72-114 (TPPQIRLQIGSRSTEMPTKNSHEPSHRKAAAPPAGTTISHTQA) are domain II. Over residues 81-90 (GSRSTEMPTK) the composition is skewed to polar residues. The segment at 81–106 (GSRSTEMPTKNSHEPSHRKAAAPPAG) is disordered. The tract at residues 115–331 (NINSNFTFDS…GALKRVIANA (217 aa)) is domain III, AAA+ region. Gly159, Gly161, Lys162, and Thr163 together coordinate ATP. The segment at 332 to 451 (HFTGQSITVD…YKNLMRILSG (120 aa)) is domain IV, binds dsDNA.

The protein belongs to the DnaA family. In terms of assembly, oligomerizes as a right-handed, spiral filament on DNA at oriC.

It is found in the cytoplasm. Plays an essential role in the initiation and regulation of chromosomal replication. ATP-DnaA binds to the origin of replication (oriC) to initiate formation of the DNA replication initiation complex once per cell cycle. Binds the DnaA box (a 9 base pair repeat at the origin) and separates the double-stranded (ds)DNA. Forms a right-handed helical filament on oriC DNA; dsDNA binds to the exterior of the filament while single-stranded (ss)DNA is stabiized in the filament's interior. The ATP-DnaA-oriC complex binds and stabilizes one strand of the AT-rich DNA unwinding element (DUE), permitting loading of DNA polymerase. After initiation quickly degrades to an ADP-DnaA complex that is not apt for DNA replication. Binds acidic phospholipids. In Coxiella burnetii (strain CbuK_Q154) (Coxiella burnetii (strain Q154)), this protein is Chromosomal replication initiator protein DnaA.